We begin with the raw amino-acid sequence, 379 residues long: Cytochrome b (379 aa).

The next 4 helical transmembrane spans lie at 32 to 52 (YGSL…VLAT), 76 to 98 (WLLR…LHIG), 111 to 131 (VWNI…LGYV), and 177 to 197 (FFAL…LHIF). Heme b contacts are provided by histidine 82 and histidine 96. Heme b contacts are provided by histidine 181 and histidine 195. Histidine 200 is an a ubiquinone binding site. Helical transmembrane passes span 223-243 (YSVK…VFTL), 287-304 (LGGV…FLFS), 320-340 (LARL…WLGS), and 348-367 (NEVA…TMCA).

Belongs to the cytochrome b family. The main subunits of complex b-c1 are: cytochrome b, cytochrome c1 and the Rieske protein. Requires heme b as cofactor.

Its subcellular location is the mitochondrion inner membrane. Its function is as follows. Component of the ubiquinol-cytochrome c reductase complex (complex III or cytochrome b-c1 complex) that is part of the mitochondrial respiratory chain. The b-c1 complex mediates electron transfer from ubiquinol to cytochrome c. Contributes to the generation of a proton gradient across the mitochondrial membrane that is then used for ATP synthesis. The sequence is that of Cytochrome b (mt:Cyt-b) from Brachionus plicatilis (Marine rotifer).